The primary structure comprises 989 residues: Phosphoenolpyruvate carboxylase (989 aa).

Active-site residues include histidine 175 and lysine 630.

The protein belongs to the PEPCase type 1 family. The cofactor is Mg(2+).

It carries out the reaction oxaloacetate + phosphate = phosphoenolpyruvate + hydrogencarbonate. Forms oxaloacetate, a four-carbon dicarboxylic acid source for the tricarboxylic acid cycle. The sequence is that of Phosphoenolpyruvate carboxylase from Prochlorococcus marinus (strain MIT 9312).